We begin with the raw amino-acid sequence, 179 residues long: Acireductone dioxygenase (179 aa).

His99, His101, Glu105, and His143 together coordinate Fe(2+). Residues His99, His101, Glu105, and His143 each coordinate Ni(2+).

Belongs to the acireductone dioxygenase (ARD) family. In terms of assembly, monomer. Fe(2+) is required as a cofactor. Ni(2+) serves as cofactor.

The enzyme catalyses 1,2-dihydroxy-5-(methylsulfanyl)pent-1-en-3-one + O2 = 3-(methylsulfanyl)propanoate + CO + formate + 2 H(+). It catalyses the reaction 1,2-dihydroxy-5-(methylsulfanyl)pent-1-en-3-one + O2 = 4-methylsulfanyl-2-oxobutanoate + formate + 2 H(+). It participates in amino-acid biosynthesis; L-methionine biosynthesis via salvage pathway; L-methionine from S-methyl-5-thio-alpha-D-ribose 1-phosphate: step 5/6. Its function is as follows. Catalyzes 2 different reactions between oxygen and the acireductone 1,2-dihydroxy-3-keto-5-methylthiopentene (DHK-MTPene) depending upon the metal bound in the active site. Fe-containing acireductone dioxygenase (Fe-ARD) produces formate and 2-keto-4-methylthiobutyrate (KMTB), the alpha-ketoacid precursor of methionine in the methionine recycle pathway. Ni-containing acireductone dioxygenase (Ni-ARD) produces methylthiopropionate, carbon monoxide and formate, and does not lie on the methionine recycle pathway. The polypeptide is Acireductone dioxygenase (Sulfurihydrogenibium sp. (strain YO3AOP1)).